Reading from the N-terminus, the 360-residue chain is Phosphoserine aminotransferase (360 aa).

Arginine 42 lines the L-glutamate pocket. Residues 76-77, tryptophan 102, threonine 152, aspartate 172, and glutamine 195 contribute to the pyridoxal 5'-phosphate site; that span reads AR. N6-(pyridoxal phosphate)lysine is present on lysine 196. Pyridoxal 5'-phosphate is bound at residue 237-238; the sequence is NT.

It belongs to the class-V pyridoxal-phosphate-dependent aminotransferase family. SerC subfamily. In terms of assembly, homodimer. The cofactor is pyridoxal 5'-phosphate.

It is found in the cytoplasm. The enzyme catalyses O-phospho-L-serine + 2-oxoglutarate = 3-phosphooxypyruvate + L-glutamate. The catalysed reaction is 4-(phosphooxy)-L-threonine + 2-oxoglutarate = (R)-3-hydroxy-2-oxo-4-phosphooxybutanoate + L-glutamate. Its pathway is amino-acid biosynthesis; L-serine biosynthesis; L-serine from 3-phospho-D-glycerate: step 2/3. The protein operates within cofactor biosynthesis; pyridoxine 5'-phosphate biosynthesis; pyridoxine 5'-phosphate from D-erythrose 4-phosphate: step 3/5. In terms of biological role, catalyzes the reversible conversion of 3-phosphohydroxypyruvate to phosphoserine and of 3-hydroxy-2-oxo-4-phosphonooxybutanoate to phosphohydroxythreonine. The polypeptide is Phosphoserine aminotransferase (Pasteurella multocida (strain Pm70)).